Here is a 183-residue protein sequence, read N- to C-terminus: Copper metallothionein 2 (183 aa).

Positions 1–35 are cys-rich copper-binding 1; that stretch reads MAFNPNPEKTTSCCSTSKAQDKCTCPKGKCECETC. The interval 36-45 is spacer B1; it reads PKSTKTPGSG. Positions 46–79 are cys-rich copper-binding 2; that stretch reads PCNCGVKEKVSTCGCNGSGAACTCPPGQCACDSC. Residues 80–88 are spacer B2; sequence PRKAKSVST. A cys-rich copper-binding 3 region spans residues 89 to 110; sequence CGCGGSAAACSCPPGKCACDSC. Positions 111–120 are spacer B3; that stretch reads PKQAQEKVSS. The interval 121–142 is cys-rich copper-binding 4; sequence CACNGSGGACTCPPGKCSCSGC. Positions 143 to 156 are spacer B4; that stretch reads PAQAKENPADQPTT. Residues 157-183 are cys-rich copper-binding 5; it reads CGCQGVGVACTCPPGQCACDGCPAKAK.

This sequence belongs to the metallothionein superfamily.

It is found in the cytoplasm. Its subcellular location is the cell cortex. In terms of biological role, copper metallothionein that protects the cell against copper toxicity by tightly chelating copper ions. Required for antioxidant-mediated growth rescue in the presence of fluconazole. Acts as a critical factors for lung colonization and virulence. This chain is Copper metallothionein 2, found in Cryptococcus neoformans var. grubii serotype A (strain H99 / ATCC 208821 / CBS 10515 / FGSC 9487) (Filobasidiella neoformans var. grubii).